We begin with the raw amino-acid sequence, 115 residues long: MRLNHKQGEAGEDAALAFLQSQGCTLLARNWHCAYGEIDLIVKNGGMILFVEVKYRKNRQFGGVAYSISPSKLLKLQRSVEYYLQQNRLTNVPCRLDAVLIEGSRPPEWIQNITG.

This sequence belongs to the UPF0102 family.

The chain is UPF0102 protein NMB2089 from Neisseria meningitidis serogroup B (strain ATCC BAA-335 / MC58).